A 432-amino-acid polypeptide reads, in one-letter code: MNVLIIGGGGRENAIADAIARSERNPALFAVMAKKNPGIAALCEDFLLAKETDVEKVVGYAREKGIEMVFIGPEAPLAVGLADALEDAGIGAVGPRKNVARIEFDKAWARNFMKDNDIEGSPAFKVFSDKEGLQEYIEELGSVAIKPAGLTGGKGVKVMGDQLPDTGAAYDYAVSLLDGDNVVVEENLVGEEFTVQAFVDGKNLAFTPCVQDHKRAFENDFGPNTGGMGSYSDSDGLLPFVTIDDLYHAREIMKATITALGATETPFKGMLYGQFILTKNGPKVIEFNARFGDPEAMNVLPLLKTDMIDVMSAVVNGTLDELDVEFLKRATVCKYAVPAGYPDEPSKDKEVVVGNIGDALLFYSSVYEKDGKVYTTSSRAVAVVGVANSITDAEVIAQNALENITGDLHFRRDIGTPELVQRRVTHMEQIRR.

The region spanning Arg-110 to Asn-316 is the ATP-grasp domain. Position 137-194 (Ile-137–Thr-194) interacts with ATP. The Mg(2+) site is built by Gln-274, Glu-286, and Asn-288. Positions 274, 286, and 288 each coordinate Mn(2+).

It belongs to the GARS family. The cofactor is Mg(2+). Mn(2+) serves as cofactor.

It catalyses the reaction 5-phospho-beta-D-ribosylamine + glycine + ATP = N(1)-(5-phospho-beta-D-ribosyl)glycinamide + ADP + phosphate + H(+). The protein operates within purine metabolism; IMP biosynthesis via de novo pathway; N(1)-(5-phospho-D-ribosyl)glycinamide from 5-phospho-alpha-D-ribose 1-diphosphate: step 2/2. The chain is Phosphoribosylamine--glycine ligase from Methanococcoides burtonii (strain DSM 6242 / NBRC 107633 / OCM 468 / ACE-M).